Here is a 405-residue protein sequence, read N- to C-terminus: L-rhamnonate dehydratase (405 aa).

Substrate is bound by residues His-33 and Arg-59. Asp-226, Glu-252, and Glu-280 together coordinate Mg(2+). The active-site Proton acceptor is His-329. Substrate is bound at residue Glu-349.

The protein belongs to the mandelate racemase/muconate lactonizing enzyme family. RhamD subfamily. As to quaternary structure, homooctamer; tetramer of dimers. Mg(2+) serves as cofactor.

The catalysed reaction is L-rhamnonate = 2-dehydro-3-deoxy-L-rhamnonate + H2O. Catalyzes the dehydration of L-rhamnonate to 2-keto-3-deoxy-L-rhamnonate (KDR). The sequence is that of L-rhamnonate dehydratase from Escherichia coli O127:H6 (strain E2348/69 / EPEC).